We begin with the raw amino-acid sequence, 494 residues long: NAD(P)H-quinone oxidoreductase subunit 2 B, chloroplastic (494 aa).

A run of 13 helical transmembrane segments spans residues 6 to 26 (LLLF…GLIL), 39 to 59 (TPWF…VLLF), 81 to 101 (IFRF…VEYI), 106 to 126 (MAIT…MVLC), 131 to 151 (LVTI…LSGY), 166 to 186 (LLMG…LYGL), 211 to 231 (ILIA…LVPF), 277 to 297 (WHLL…LIAI), 305 to 325 (MLAY…IAGD), 336 to 356 (YMLF…LFGL), 377 to 397 (AFSL…AGFF), 413 to 433 (LLVS…LKII), and 468 to 488 (MIVC…IIAI).

Belongs to the complex I subunit 2 family. In terms of assembly, NDH is composed of at least 16 different subunits, 5 of which are encoded in the nucleus.

The protein resides in the plastid. It localises to the chloroplast thylakoid membrane. The enzyme catalyses a plastoquinone + NADH + (n+1) H(+)(in) = a plastoquinol + NAD(+) + n H(+)(out). The catalysed reaction is a plastoquinone + NADPH + (n+1) H(+)(in) = a plastoquinol + NADP(+) + n H(+)(out). In terms of biological role, NDH shuttles electrons from NAD(P)H:plastoquinone, via FMN and iron-sulfur (Fe-S) centers, to quinones in the photosynthetic chain and possibly in a chloroplast respiratory chain. The immediate electron acceptor for the enzyme in this species is believed to be plastoquinone. Couples the redox reaction to proton translocation, and thus conserves the redox energy in a proton gradient. The chain is NAD(P)H-quinone oxidoreductase subunit 2 B, chloroplastic from Cycas taitungensis (Prince sago).